The sequence spans 71 residues: Small ribosomal subunit protein bS21 (71 aa).

The protein belongs to the bacterial ribosomal protein bS21 family.

The protein is Small ribosomal subunit protein bS21 of Shewanella piezotolerans (strain WP3 / JCM 13877).